Consider the following 226-residue polypeptide: 7-cyano-7-deazaguanine synthase (226 aa).

Residue 9-19 (LSGGLDSTVAT) coordinates ATP. The Zn(2+) site is built by cysteine 192, cysteine 200, cysteine 203, and cysteine 206.

The protein belongs to the QueC family. The cofactor is Zn(2+).

It carries out the reaction 7-carboxy-7-deazaguanine + NH4(+) + ATP = 7-cyano-7-deazaguanine + ADP + phosphate + H2O + H(+). It participates in purine metabolism; 7-cyano-7-deazaguanine biosynthesis. Catalyzes the ATP-dependent conversion of 7-carboxy-7-deazaguanine (CDG) to 7-cyano-7-deazaguanine (preQ(0)). In Methanosphaera stadtmanae (strain ATCC 43021 / DSM 3091 / JCM 11832 / MCB-3), this protein is 7-cyano-7-deazaguanine synthase.